The following is a 253-amino-acid chain: Dof zinc finger protein DOF3.4 (253 aa).

The Dof-type zinc-finger motif lies at 30 to 84 (LPCPRCDSSNTKFCYYNNYNFSQPRHFCKACRRYWTHGGTLRDVPVGGGTRKSAK). Zn(2+) is bound by residues cysteine 32, cysteine 35, cysteine 57, and cysteine 60. The disordered stretch occupies residues 73–103 (VPVGGGTRKSAKRSRTCSNSSSSSVSGVVSN). Over residues 90 to 103 (SNSSSSSVSGVVSN) the composition is skewed to low complexity.

As to quaternary structure, interacts with OBF4 or OBF5. Constitutively expressed in the whole plant.

The protein localises to the nucleus. In terms of biological role, transcription factor that binds specifically to a 5'-AA[AG]G-3' consensus core sequence. Enhances the DNA binding of OBF transcription factors to OCS elements. This is Dof zinc finger protein DOF3.4 (DOF3.4) from Arabidopsis thaliana (Mouse-ear cress).